The following is a 146-amino-acid chain: Large ribosomal subunit protein uL23B (146 aa).

Positions 1 to 22 (MAPSSNKVGKAIQAKKAVVKGS) are disordered.

This sequence belongs to the universal ribosomal protein uL23 family.

This protein binds to a specific region on the 26S rRNA. In Caenorhabditis elegans, this protein is Large ribosomal subunit protein uL23B (rpl-23A.2).